Here is a 150-residue protein sequence, read N- to C-terminus: Endoribonuclease YbeY (150 aa).

Zn(2+) is bound by residues histidine 115, histidine 119, and histidine 125.

It belongs to the endoribonuclease YbeY family. Zn(2+) serves as cofactor.

Its subcellular location is the cytoplasm. Its function is as follows. Single strand-specific metallo-endoribonuclease involved in late-stage 70S ribosome quality control and in maturation of the 3' terminus of the 16S rRNA. This Aquifex aeolicus (strain VF5) protein is Endoribonuclease YbeY.